The chain runs to 291 residues: Shikimate dehydrogenase (NADP(+)) (291 aa).

Shikimate contacts are provided by residues 26 to 28 (SLS) and serine 73. Lysine 77 serves as the catalytic Proton acceptor. Shikimate-binding residues include asparagine 98 and aspartate 113. Residues 137–141 (GAGGA) and valine 238 each bind NADP(+). Position 240 (tyrosine 240) interacts with shikimate. Glycine 261 is a binding site for NADP(+).

It belongs to the shikimate dehydrogenase family. In terms of assembly, homodimer.

The enzyme catalyses shikimate + NADP(+) = 3-dehydroshikimate + NADPH + H(+). It functions in the pathway metabolic intermediate biosynthesis; chorismate biosynthesis; chorismate from D-erythrose 4-phosphate and phosphoenolpyruvate: step 4/7. Involved in the biosynthesis of the chorismate, which leads to the biosynthesis of aromatic amino acids. Catalyzes the reversible NADPH linked reduction of 3-dehydroshikimate (DHSA) to yield shikimate (SA). The chain is Shikimate dehydrogenase (NADP(+)) from Listeria monocytogenes serotype 4b (strain F2365).